Reading from the N-terminus, the 239-residue chain is Probable phosphatase Csac_1188 (239 aa).

9 residues coordinate Zn(2+): His-8, His-10, His-16, His-41, Glu-74, His-102, His-132, Asp-192, and His-194.

This sequence belongs to the PHP family. It depends on Zn(2+) as a cofactor.

The sequence is that of Probable phosphatase Csac_1188 from Caldicellulosiruptor saccharolyticus (strain ATCC 43494 / DSM 8903 / Tp8T 6331).